Reading from the N-terminus, the 38-residue chain is Photosystem II reaction center protein L (38 aa).

The helical transmembrane segment at 17–37 (SLYWGLLLIFVLAVLFSNYSF) threads the bilayer.

This sequence belongs to the PsbL family. As to quaternary structure, PSII is composed of 1 copy each of membrane proteins PsbA, PsbB, PsbC, PsbD, PsbE, PsbF, PsbH, PsbI, PsbJ, PsbK, PsbL, PsbM, PsbT, PsbX, PsbY, PsbZ, Psb30/Ycf12, at least 3 peripheral proteins of the oxygen-evolving complex and a large number of cofactors. It forms dimeric complexes.

The protein resides in the plastid. Its subcellular location is the chloroplast thylakoid membrane. In terms of biological role, one of the components of the core complex of photosystem II (PSII). PSII is a light-driven water:plastoquinone oxidoreductase that uses light energy to abstract electrons from H(2)O, generating O(2) and a proton gradient subsequently used for ATP formation. It consists of a core antenna complex that captures photons, and an electron transfer chain that converts photonic excitation into a charge separation. This subunit is found at the monomer-monomer interface and is required for correct PSII assembly and/or dimerization. This Bowenia serrulata (Byfield fern) protein is Photosystem II reaction center protein L.